Consider the following 480-residue polypeptide: Protein nucleotidyltransferase YdiU (480 aa).

ATP contacts are provided by Gly-86, Gly-88, Arg-89, Lys-109, Asp-121, Gly-122, Arg-172, and Arg-179. Asp-248 functions as the Proton acceptor in the catalytic mechanism. Positions 249 and 258 each coordinate Mg(2+). Asp-258 contacts ATP.

The protein belongs to the SELO family. It depends on Mg(2+) as a cofactor. Mn(2+) serves as cofactor.

It carries out the reaction L-seryl-[protein] + ATP = 3-O-(5'-adenylyl)-L-seryl-[protein] + diphosphate. The catalysed reaction is L-threonyl-[protein] + ATP = 3-O-(5'-adenylyl)-L-threonyl-[protein] + diphosphate. It catalyses the reaction L-tyrosyl-[protein] + ATP = O-(5'-adenylyl)-L-tyrosyl-[protein] + diphosphate. The enzyme catalyses L-histidyl-[protein] + UTP = N(tele)-(5'-uridylyl)-L-histidyl-[protein] + diphosphate. It carries out the reaction L-seryl-[protein] + UTP = O-(5'-uridylyl)-L-seryl-[protein] + diphosphate. The catalysed reaction is L-tyrosyl-[protein] + UTP = O-(5'-uridylyl)-L-tyrosyl-[protein] + diphosphate. Nucleotidyltransferase involved in the post-translational modification of proteins. It can catalyze the addition of adenosine monophosphate (AMP) or uridine monophosphate (UMP) to a protein, resulting in modifications known as AMPylation and UMPylation. In Enterobacter sp. (strain 638), this protein is Protein nucleotidyltransferase YdiU.